Reading from the N-terminus, the 391-residue chain is Carbamoyl phosphate synthase small chain (391 aa).

Residues 1-202 (MTQPAILVLE…AHASAGSGEE (202 aa)) form a CPSase region. The L-glutamine site is built by Ser47, Gly254, and Gly256. The Glutamine amidotransferase type-1 domain maps to 206 to 391 (KVVAYDYGVK…RFVDLMAARA (186 aa)). Cys282 (nucleophile) is an active-site residue. L-glutamine is bound by residues Leu283, Gln286, Asn324, Gly326, and Phe327. Residues His366 and Glu368 contribute to the active site.

It belongs to the CarA family. In terms of assembly, composed of two chains; the small (or glutamine) chain promotes the hydrolysis of glutamine to ammonia, which is used by the large (or ammonia) chain to synthesize carbamoyl phosphate. Tetramer of heterodimers (alpha,beta)4.

The enzyme catalyses hydrogencarbonate + L-glutamine + 2 ATP + H2O = carbamoyl phosphate + L-glutamate + 2 ADP + phosphate + 2 H(+). It catalyses the reaction L-glutamine + H2O = L-glutamate + NH4(+). It functions in the pathway amino-acid biosynthesis; L-arginine biosynthesis; carbamoyl phosphate from bicarbonate: step 1/1. It participates in pyrimidine metabolism; UMP biosynthesis via de novo pathway; (S)-dihydroorotate from bicarbonate: step 1/3. Small subunit of the glutamine-dependent carbamoyl phosphate synthetase (CPSase). CPSase catalyzes the formation of carbamoyl phosphate from the ammonia moiety of glutamine, carbonate, and phosphate donated by ATP, constituting the first step of 2 biosynthetic pathways, one leading to arginine and/or urea and the other to pyrimidine nucleotides. The small subunit (glutamine amidotransferase) binds and cleaves glutamine to supply the large subunit with the substrate ammonia. This is Carbamoyl phosphate synthase small chain from Xanthomonas axonopodis pv. citri (strain 306).